The following is a 327-amino-acid chain: Ribose-phosphate pyrophosphokinase (327 aa).

Residues 46-48 and 105-106 contribute to the ATP site; these read NGE and RQ. Histidine 139 and aspartate 179 together coordinate Mg(2+). The active site involves lysine 203. D-ribose 5-phosphate-binding positions include arginine 205, aspartate 231, and 235 to 239; that span reads DTGGT.

Belongs to the ribose-phosphate pyrophosphokinase family. Class I subfamily. As to quaternary structure, homohexamer. Requires Mg(2+) as cofactor.

The protein resides in the cytoplasm. It carries out the reaction D-ribose 5-phosphate + ATP = 5-phospho-alpha-D-ribose 1-diphosphate + AMP + H(+). The protein operates within metabolic intermediate biosynthesis; 5-phospho-alpha-D-ribose 1-diphosphate biosynthesis; 5-phospho-alpha-D-ribose 1-diphosphate from D-ribose 5-phosphate (route I): step 1/1. In terms of biological role, involved in the biosynthesis of the central metabolite phospho-alpha-D-ribosyl-1-pyrophosphate (PRPP) via the transfer of pyrophosphoryl group from ATP to 1-hydroxyl of ribose-5-phosphate (Rib-5-P). This is Ribose-phosphate pyrophosphokinase from Mycobacterium leprae (strain TN).